The following is an 89-amino-acid chain: Small ribosomal subunit protein bS20 (89 aa).

Residues 1–29 (MTLANIKSAKKRAVQSEKRRQHNASQRSM) form a disordered region.

The protein belongs to the bacterial ribosomal protein bS20 family.

Binds directly to 16S ribosomal RNA. This is Small ribosomal subunit protein bS20 from Haemophilus influenzae (strain 86-028NP).